Here is a 496-residue protein sequence, read N- to C-terminus: Cytochrome P450 71B1 (496 aa).

A heme-binding site is contributed by cysteine 436.

The protein belongs to the cytochrome P450 family. It depends on heme as a cofactor.

The protein is Cytochrome P450 71B1 (CYP71B1) of Thlaspi arvense (Field penny-cress).